The chain runs to 189 residues: ATP synthase subunit b (189 aa).

Residues 38–58 (PMFLATLIAFILVVLILWFLL) traverse the membrane as a helical segment.

It belongs to the ATPase B chain family. In terms of assembly, F-type ATPases have 2 components, F(1) - the catalytic core - and F(0) - the membrane proton channel. F(1) has five subunits: alpha(3), beta(3), gamma(1), delta(1), epsilon(1). F(0) has three main subunits: a(1), b(2) and c(10-14). The alpha and beta chains form an alternating ring which encloses part of the gamma chain. F(1) is attached to F(0) by a central stalk formed by the gamma and epsilon chains, while a peripheral stalk is formed by the delta and b chains.

It is found in the cell membrane. Functionally, f(1)F(0) ATP synthase produces ATP from ADP in the presence of a proton or sodium gradient. F-type ATPases consist of two structural domains, F(1) containing the extramembraneous catalytic core and F(0) containing the membrane proton channel, linked together by a central stalk and a peripheral stalk. During catalysis, ATP synthesis in the catalytic domain of F(1) is coupled via a rotary mechanism of the central stalk subunits to proton translocation. Component of the F(0) channel, it forms part of the peripheral stalk, linking F(1) to F(0). The chain is ATP synthase subunit b from Mycoplasmopsis agalactiae (strain NCTC 10123 / CIP 59.7 / PG2) (Mycoplasma agalactiae).